The chain runs to 57 residues: DNA-directed RNA polymerase subunit Rpo6 (57 aa).

This sequence belongs to the archaeal Rpo6/eukaryotic RPB6 RNA polymerase subunit family. Part of the RNA polymerase complex.

Its subcellular location is the cytoplasm. The catalysed reaction is RNA(n) + a ribonucleoside 5'-triphosphate = RNA(n+1) + diphosphate. DNA-dependent RNA polymerase (RNAP) catalyzes the transcription of DNA into RNA using the four ribonucleoside triphosphates as substrates. The sequence is that of DNA-directed RNA polymerase subunit Rpo6 from Pyrococcus abyssi (strain GE5 / Orsay).